The following is a 505-amino-acid chain: Deoxyguanosinetriphosphate triphosphohydrolase (505 aa).

Positions 66 to 273 (RLTHSMEVQQ…MEAADDISYC (208 aa)) constitute an HD domain.

This sequence belongs to the dGTPase family. Type 1 subfamily. In terms of assembly, homotetramer. Mg(2+) serves as cofactor.

It catalyses the reaction dGTP + H2O = 2'-deoxyguanosine + triphosphate + H(+). Functionally, dGTPase preferentially hydrolyzes dGTP over the other canonical NTPs. The chain is Deoxyguanosinetriphosphate triphosphohydrolase from Shigella flexneri.